A 211-amino-acid polypeptide reads, in one-letter code: MNGILISLEGPDGAGKTTVLQEILPEIQKMKREVVPTREPGGVRVAEEIRQIILDPKNTEIDSKTELMLFEAARRLHMQEKMLPALRAGKVVIVDRFIDSSVAYQGYGRDLGVEVVDWLNYFATDGLKPDLTLYFDIDTDVALERIMKNRADEVNRLDLERAEMHRKVREGYLEIVAKEPERFVKIDASQSLEKVVADTLEVLKKRFVSEF.

10 to 17 serves as a coordination point for ATP; it reads GPDGAGKT.

This sequence belongs to the thymidylate kinase family.

It carries out the reaction dTMP + ATP = dTDP + ADP. In terms of biological role, phosphorylation of dTMP to form dTDP in both de novo and salvage pathways of dTTP synthesis. This chain is Thymidylate kinase, found in Lactococcus lactis subsp. cremoris (strain SK11).